The primary structure comprises 778 residues: pH-response regulator protein palH/prr-4 (778 aa).

Over M1 to Q108 the chain is Extracellular. The helical transmembrane segment at C109–T129 threads the bilayer. Over P130–W160 the chain is Periplasmic. The helical transmembrane segment at L161–F181 threads the bilayer. Residues R182–D201 are Extracellular-facing. The chain crosses the membrane as a helical span at residues V202–A222. Residues Q223 to K237 are Periplasmic-facing. The helical transmembrane segment at V238–N258 threads the bilayer. The Extracellular portion of the chain corresponds to S259–A275. A helical membrane pass occupies residues V276–L296. Topologically, residues Y297–N314 are periplasmic. The chain crosses the membrane as a helical span at residues M315–L335. Residues D336–D341 are Extracellular-facing. Residues F342 to W362 traverse the membrane as a helical segment. Over E363–P778 the chain is Periplasmic. Disordered regions lie at residues A394–S499, E514–S605, and E660–P778. Residues H446–P456 show a composition bias toward basic and acidic residues. Residues N457–T466 show a composition bias toward polar residues. Composition is skewed to basic and acidic residues over residues F588–S605 and L661–R675. Over residues P720–Y732 the composition is skewed to polar residues. Residues A749–S759 are compositionally biased toward low complexity. Positions R769–P778 are enriched in polar residues.

This sequence belongs to the palH/RIM21 family.

It localises to the cell membrane. Required for the proteolytic cleavage of the transcription factor pacc-1 in response to alkaline ambient pH. The protein is pH-response regulator protein palH/prr-4 (prr-4) of Neurospora crassa (strain ATCC 24698 / 74-OR23-1A / CBS 708.71 / DSM 1257 / FGSC 987).